A 290-amino-acid chain; its full sequence is Probable 2-(5''-triphosphoribosyl)-3'-dephosphocoenzyme-A synthase (290 aa).

This sequence belongs to the CitG/MdcB family.

The enzyme catalyses 3'-dephospho-CoA + ATP = 2'-(5''-triphospho-alpha-D-ribosyl)-3'-dephospho-CoA + adenine. In terms of biological role, involved in the formation of 2-(5''-phosphoribosyl)-3'-dephosphocoenzyme-A, the prosthetic group of the acyl-carrier protein of the malonate decarboxylase. The sequence is that of Probable 2-(5''-triphosphoribosyl)-3'-dephosphocoenzyme-A synthase from Pseudomonas fluorescens (strain Pf0-1).